The sequence spans 204 residues: Molybdenum cofactor guanylyltransferase (204 aa).

GTP contacts are provided by residues 12–14 (LAG), lysine 25, asparagine 53, aspartate 71, and aspartate 101. Aspartate 101 contacts Mg(2+).

This sequence belongs to the MobA family. Monomer. It depends on Mg(2+) as a cofactor.

Its subcellular location is the cytoplasm. The catalysed reaction is Mo-molybdopterin + GTP + H(+) = Mo-molybdopterin guanine dinucleotide + diphosphate. Transfers a GMP moiety from GTP to Mo-molybdopterin (Mo-MPT) cofactor (Moco or molybdenum cofactor) to form Mo-molybdopterin guanine dinucleotide (Mo-MGD) cofactor. The polypeptide is Molybdenum cofactor guanylyltransferase (Ralstonia pickettii (strain 12J)).